Here is a 140-residue protein sequence, read N- to C-terminus: MAIERTFSIIKPDATERNLTGAINALIEKAGLRIVAQKRIRMTREQAETFYAVHKARPFFGELVDFMISGPVVVQVLEGEGAILKYRDVMGATDPSKAADGTIRKLHAKSIGENSVHGSDAAETAAIEIAQFFSGNEIVG.

ATP is bound by residues Lys-11, Phe-59, Arg-87, Thr-93, Arg-104, and Asn-114. The active-site Pros-phosphohistidine intermediate is the His-117.

This sequence belongs to the NDK family. In terms of assembly, homotetramer. Mg(2+) serves as cofactor.

The protein resides in the cytoplasm. The enzyme catalyses a 2'-deoxyribonucleoside 5'-diphosphate + ATP = a 2'-deoxyribonucleoside 5'-triphosphate + ADP. It catalyses the reaction a ribonucleoside 5'-diphosphate + ATP = a ribonucleoside 5'-triphosphate + ADP. Its function is as follows. Major role in the synthesis of nucleoside triphosphates other than ATP. The ATP gamma phosphate is transferred to the NDP beta phosphate via a ping-pong mechanism, using a phosphorylated active-site intermediate. The polypeptide is Nucleoside diphosphate kinase (Bradyrhizobium sp. (strain BTAi1 / ATCC BAA-1182)).